Reading from the N-terminus, the 324-residue chain is MEKFTMSETKVWSGRIDSADGPTAVRWHQQVRAPQEDSPAGVALIGYPCDLGVYINKGRVGAANGPDEIIKALANLPWRLTHPVYDCGNIQWEGELEDAQAALATKVFKQLQAGHSPIVLGGGHDVAWGSFQGLRRHLDQAAPDKVLGILNLDAHFDLRSDSEGASSGTPFQQIAKYCKTAGKPFHYAVFGISEYANTQALFDRADKLGVTYLKDTHCGYTQLGPMLRALDAFLSKVDCLYLTIDLDVLPAATAPGVSAPAAYGVPLEIVEAMLDAIQRKALPVLMADIAEYNPTYDIDSRTARVAARLAARLAGLLGKPTTKA.

Mn(2+)-binding residues include H124, D153, H155, D157, D245, and D247.

Belongs to the arginase family. The cofactor is Mn(2+).

The catalysed reaction is N-formimidoyl-L-glutamate + H2O = formamide + L-glutamate. Its pathway is amino-acid degradation; L-histidine degradation into L-glutamate; L-glutamate from N-formimidoyl-L-glutamate (hydrolase route): step 1/1. Its function is as follows. Catalyzes the conversion of N-formimidoyl-L-glutamate to L-glutamate and formamide. This chain is Formimidoylglutamase, found in Hahella chejuensis (strain KCTC 2396).